An 89-amino-acid chain; its full sequence is Small ribosomal subunit protein uS17A (89 aa).

Belongs to the universal ribosomal protein uS17 family. Part of the 30S ribosomal subunit.

In terms of biological role, one of the primary rRNA binding proteins, it binds specifically to the 5'-end of 16S ribosomal RNA. This is Small ribosomal subunit protein uS17A from Bacteroides thetaiotaomicron (strain ATCC 29148 / DSM 2079 / JCM 5827 / CCUG 10774 / NCTC 10582 / VPI-5482 / E50).